A 168-amino-acid polypeptide reads, in one-letter code: Small ribosomal subunit protein uS5 (168 aa).

An S5 DRBM domain is found at 13 to 76 (IQEKLVAVRR…ENARRNMISV (64 aa)).

It belongs to the universal ribosomal protein uS5 family. Part of the 30S ribosomal subunit. Contacts proteins S4 and S8.

Its function is as follows. With S4 and S12 plays an important role in translational accuracy. Located at the back of the 30S subunit body where it stabilizes the conformation of the head with respect to the body. In Coxiella burnetii (strain RSA 493 / Nine Mile phase I), this protein is Small ribosomal subunit protein uS5.